The chain runs to 174 residues: ATP-dependent protease subunit HslV (174 aa).

Residue threonine 2 is part of the active site. Residues glycine 157, cysteine 160, and threonine 163 each coordinate Na(+).

Belongs to the peptidase T1B family. HslV subfamily. As to quaternary structure, a double ring-shaped homohexamer of HslV is capped on each side by a ring-shaped HslU homohexamer. The assembly of the HslU/HslV complex is dependent on binding of ATP.

It is found in the cytoplasm. The catalysed reaction is ATP-dependent cleavage of peptide bonds with broad specificity.. Its activity is regulated as follows. Allosterically activated by HslU binding. Its function is as follows. Protease subunit of a proteasome-like degradation complex believed to be a general protein degrading machinery. In Yersinia pseudotuberculosis serotype I (strain IP32953), this protein is ATP-dependent protease subunit HslV.